A 473-amino-acid chain; its full sequence is Methionine aminopeptidase 2 (473 aa).

A disordered region spans residues 23–121 (LAEDSSNGTQ…KLVSIDQSYP (99 aa)). A compositionally biased stretch (polar residues) spans 41-53 (KATTAVGQDNGNN). Over residues 73 to 83 (DDDDDDEDDDV) the composition is skewed to acidic residues. Residues 84–93 (AAAAAAVGDA) show a composition bias toward low complexity. A compositionally biased stretch (basic residues) spans 97-113 (KKKKKKKSSNKKKKKKL). His-224 contributes to the substrate binding site. Asp-244, Asp-255, and His-326 together coordinate a divalent metal cation. Substrate is bound at residue His-334. Glu-359 and Glu-454 together coordinate a divalent metal cation.

Belongs to the peptidase M24A family. Methionine aminopeptidase eukaryotic type 2 subfamily. It depends on Co(2+) as a cofactor. Zn(2+) is required as a cofactor. Requires Mn(2+) as cofactor. The cofactor is Fe(2+).

The protein localises to the cytoplasm. The catalysed reaction is Release of N-terminal amino acids, preferentially methionine, from peptides and arylamides.. In terms of biological role, cotranslationally removes the N-terminal methionine from nascent proteins. The N-terminal methionine is often cleaved when the second residue in the primary sequence is small and uncharged (Met-Ala-, Cys, Gly, Pro, Ser, Thr, or Val). This is Methionine aminopeptidase 2 from Lodderomyces elongisporus (strain ATCC 11503 / CBS 2605 / JCM 1781 / NBRC 1676 / NRRL YB-4239) (Yeast).